Reading from the N-terminus, the 499-residue chain is Maturase K (499 aa).

This sequence belongs to the intron maturase 2 family. MatK subfamily.

It localises to the plastid. It is found in the chloroplast. In terms of biological role, usually encoded in the trnK tRNA gene intron. Probably assists in splicing its own and other chloroplast group II introns. The chain is Maturase K from Ceratozamia mexicana (Mexican horncone).